A 343-amino-acid polypeptide reads, in one-letter code: Small ribosomal subunit biogenesis GTPase RsgA (343 aa).

Residues 116–275 form the CP-type G domain; sequence HGQLKPVAAN…LIDSPGIREF (160 aa). GTP is bound by residues 163 to 166 and 217 to 225; these read NKAD and GQSGVGKSS. Zn(2+) is bound by residues Cys-299, Cys-304, His-306, and Cys-312.

It belongs to the TRAFAC class YlqF/YawG GTPase family. RsgA subfamily. As to quaternary structure, monomer. Associates with 30S ribosomal subunit, binds 16S rRNA. The cofactor is Zn(2+).

Its subcellular location is the cytoplasm. In terms of biological role, one of several proteins that assist in the late maturation steps of the functional core of the 30S ribosomal subunit. Helps release RbfA from mature subunits. May play a role in the assembly of ribosomal proteins into the subunit. Circularly permuted GTPase that catalyzes slow GTP hydrolysis, GTPase activity is stimulated by the 30S ribosomal subunit. This chain is Small ribosomal subunit biogenesis GTPase RsgA, found in Pseudomonas putida (strain ATCC 700007 / DSM 6899 / JCM 31910 / BCRC 17059 / LMG 24140 / F1).